A 363-amino-acid chain; its full sequence is p21-activated protein kinase-interacting protein 1-like (363 aa).

WD repeat units lie at residues 38 to 75, 78 to 116, 119 to 158, 200 to 238, and 241 to 282; these read AHTA…EHGA, HHNG…CQQT, AHKG…SAFI, NNPK…CVCE, and AHEN…VQTS. The disordered stretch occupies residues 309-363; it reads KEKSNTAVTASAVKDCDRPKKKKAQNETTDKEASETQVVHKKRKPETKQKKKKPS. A compositionally biased stretch (basic and acidic residues) spans 322 to 342; the sequence is KDCDRPKKKKAQNETTDKEAS. Over residues 347 to 363 the composition is skewed to basic residues; it reads VHKKRKPETKQKKKKPS.

It localises to the nucleus. The protein localises to the nucleolus. Its function is as follows. Negatively regulates the PAK1 kinase. PAK1 is a member of the PAK kinase family, which has been shown to play a positive role in the regulation of signaling pathways involving MAPK8 and RELA. PAK1 exists as an inactive homodimer, which is activated by binding of small GTPases such as CDC42 to an N-terminal regulatory domain. PAK1IP1 also binds to the N-terminus of PAK1, and inhibits the specific activation of PAK1 by CDC42. May be involved in ribosomal large subunit assembly. This is p21-activated protein kinase-interacting protein 1-like (pak1ip1) from Xenopus laevis (African clawed frog).